A 1033-amino-acid polypeptide reads, in one-letter code: uncharacterized protein (1033 aa).

Coiled-coil stretches lie at residues 212–326 (EIFK…KMNN), 405–582 (ILNN…LYKF), 615–771 (LEKE…LKLN), and 797–1019 (KMKI…NIDN).

This is an uncharacterized protein from Plasmodium falciparum (isolate 3D7).